The following is a 331-amino-acid chain: MAEAQIKKNIFTISSSPHVRCDESVSKIMWSVCLALTPAAVFGVFNFGIHALEVIITGIIAAVVTEYFVEKVRNKPITITDGSAFLTGLLLSMCLPPDIPPYMVAIGSFIAIAIAKHSMGGLGQNIFNPAHIGRAALMVSWPVAMTTWSKLSASGVDAVTTATPLGILKLQGYSKLLETFGGQGALYKAMFLGTRNGSIGETSTILLVLGGLYLIYKKYINWQIPVVMIGTVGILTWAFGGTTGIFTGDPVFHMMAGGLVIGAFFMATDMVTIPMTIKGQIIFALGAGALTSLIRLKGGYPEGVCYSILLMNAVTPLIDKFTQPVKFGTRR.

The next 3 helical transmembrane spans lie at 23 to 43, 44 to 64, and 84 to 106; these read ESVS…AVFG, VFNF…AAVV, and AFLT…MVAI. Position 163 is an FMN phosphoryl threonine (T163). The next 4 helical transmembrane spans lie at 196–216, 226–246, 251–271, and 273–293; these read NGSI…YLIY, VVMI…TGIF, VFHM…TDMV, and IPMT…LTSL.

The protein belongs to the NqrB/RnfD family. The complex is composed of six subunits: RnfA, RnfB, RnfC, RnfD, RnfE and RnfG. FMN serves as cofactor.

It localises to the cell membrane. Part of a membrane-bound complex that couples electron transfer with translocation of ions across the membrane. Couples electron transfer from reduced ferredoxin to NAD(+) with translocation of H(+) out of the cell. Essential for energy conservation during autotrophic growth. Contributes to ATP synthesis during heterotrophic growth. In Clostridium ljungdahlii (strain ATCC 55383 / DSM 13528 / PETC), this protein is Proton-translocating ferredoxin:NAD(+) oxidoreductase complex subunit D.